The chain runs to 409 residues: tRNA(Met) cytidine acetate ligase (409 aa).

ATP contacts are provided by residues 7 to 20 (VVEYNPMHNGHLYH), Gly-102, Asn-169, and Arg-194.

The protein belongs to the TmcAL family.

The protein resides in the cytoplasm. It catalyses the reaction cytidine(34) in elongator tRNA(Met) + acetate + ATP = N(4)-acetylcytidine(34) in elongator tRNA(Met) + AMP + diphosphate. Its function is as follows. Catalyzes the formation of N(4)-acetylcytidine (ac(4)C) at the wobble position of elongator tRNA(Met), using acetate and ATP as substrates. First activates an acetate ion to form acetyladenylate (Ac-AMP) and then transfers the acetyl group to tRNA to form ac(4)C34. This is tRNA(Met) cytidine acetate ligase from Clostridium botulinum (strain Kyoto / Type A2).